We begin with the raw amino-acid sequence, 1020 residues long: RNA-binding protein 44 (1020 aa).

Disordered regions lie at residues 1–23 (MQAT…GHLQ) and 50–70 (DGEG…NSSV). The span at 58-70 (TDERTNVKENSSV) shows a compositional bias: basic and acidic residues. Phosphoserine is present on residues S249, S371, S374, S516, S683, and S690. An RRM domain is found at 796 to 870 (FLIHVGGLCP…KSVNVRLVKI (75 aa)).

Homodimer. Interacts with TEX14.

The protein resides in the cytoplasm. Component of intercellular bridges during meiosis. Intercellular bridges are evolutionarily conserved structures that connect differentiating germ cells. Not required for fertility. The protein is RNA-binding protein 44 (Rbm44) of Rattus norvegicus (Rat).